Consider the following 677-residue polypeptide: Elongation factor G 2 (677 aa).

The region spanning 8–283 (SRIRNIGIIA…AVVNFLPSPE (276 aa)) is the tr-type G domain. Residues 17 to 24 (AHIDAGKT), 81 to 85 (DTPGH), and 135 to 138 (NKMD) contribute to the GTP site.

The protein belongs to the TRAFAC class translation factor GTPase superfamily. Classic translation factor GTPase family. EF-G/EF-2 subfamily.

The protein localises to the cytoplasm. In terms of biological role, catalyzes the GTP-dependent ribosomal translocation step during translation elongation. During this step, the ribosome changes from the pre-translocational (PRE) to the post-translocational (POST) state as the newly formed A-site-bound peptidyl-tRNA and P-site-bound deacylated tRNA move to the P and E sites, respectively. Catalyzes the coordinated movement of the two tRNA molecules, the mRNA and conformational changes in the ribosome. This is Elongation factor G 2 from Syntrophus aciditrophicus (strain SB).